A 2498-amino-acid chain; its full sequence is Nuclear receptor corepressor 1 (2498 aa).

Disordered regions lie at residues 1-38, 54-84, 134-169, and 198-223; these read MSSS…QQEY, IQQQ…SGYD, SEVK…SKLS, and QQQL…VEQK. Composition is skewed to basic and acidic residues over residues 71–82, 134–148, and 204–213; these read PVSDRPQDRRSG, SEVK…KHES, and EAAKPPEPEK. The segment at 154 to 304 is interaction with tbl1xr1-A; sequence SGQPGDDQDA…REQNICQRYD (151 aa). The stretch at 168–208 forms a coiled coil; it reads LSKEELIQSMDRVDREIAKVEQQILKLKKKQQQLEEEAAKP. One can recognise an SANT 1 domain in the interval 427 to 478; that stretch reads QFMNVWTDHEKEIFKEKFVRHPKNFGLIASYLERKNVSDCVLYYYLTKKNEN. Residues 483 to 493 are compositionally biased toward basic residues; the sequence is VRRNYPKRRGR. Disordered stretches follow at residues 483–649, 668–912, 1075–1122, 1417–1436, 1470–1583, 1737–1851, and 1916–1990; these read VRRN…GSKS, NLLQ…FGSR, SLSD…GTPG, DLVS…IMEG, SWGV…QRES, PGTQ…AQES, and PQME…TAHT. 2 stretches are compositionally biased toward basic and acidic residues: residues 502–525 and 535–548; these read SQEE…KEDE and KEEL…KIDA. Residues 502 to 552 are a coiled coil; that stretch reads SQEEKEIEKVEEEKADRNDKKEDERREEEEKEEKEELREGAKDKIDAVAED. The span at 582–611 shows a compositional bias: low complexity; that stretch reads ASEAAAANAVTTATTAPVTTTSTATTVAPV. Over residues 612–627 the composition is skewed to pro residues; that stretch reads PVAPPPEEPTPPPPPQ. The 38-residue stretch at 628 to 665 folds into the SANT 2 domain; the sequence is EQSLVDHGRNWGAIAKMVGSKSESQCKNFYFNYKRRHN. The span at 689-699 shows a compositional bias: polar residues; that stretch reads QCDSIASTVSA. A compositionally biased stretch (acidic residues) spans 700–719; the sequence is QEDDENEASNEEENPEDSEG. 2 stretches are compositionally biased toward low complexity: residues 727–738 and 761–774; these read ESAPSPSPAEAA and DAAS…SPSP. The span at 854–863 shows a compositional bias: basic and acidic residues; the sequence is MERLMDRAEA. 2 stretches are compositionally biased toward polar residues: residues 872 to 891 and 1102 to 1122; these read QNIS…SATC and ATSS…GTPG. A compositionally biased stretch (basic and acidic residues) spans 1484–1501; it reads KMGERSKHEDTKSSDAIR. The segment covering 1505 to 1516 has biased composition (polar residues); it reads TSVVSSGPSVLR. The span at 1545 to 1558 shows a compositional bias: low complexity; that stretch reads PSPMSRSSPMARSA. The stretch at 1765 to 1804 forms a coiled coil; the sequence is VSAERERERERERERDREREKEQRERESDRERERDRLAHA. Residues 1767 to 1802 are compositionally biased toward basic and acidic residues; it reads AERERERERERERDREREKEQRERESDRERERDRLA. Low complexity-rich tracts occupy residues 1803 to 1813 and 1820 to 1835; these read HAAAAAAAASA and RPVS…RPSS. Residues 1842–1851 show a composition bias toward polar residues; it reads PSPSVRAQES. Positions 1921–1942 are enriched in basic and acidic residues; that stretch reads AKPKESKNDSARSEENLSRRNA. A compositionally biased stretch (low complexity) spans 1958 to 1980; sequence SPYTSSSFSSSKSQSQPSSAVYS. Positions 2012–2016 match the CORNR box 1 motif; sequence IDVII. A disordered region spans residues 2022–2109; the sequence is SDKDGRERNS…SPPQQTIPGH (88 aa). Over residues 2031-2040 the composition is skewed to low complexity; sequence SQSSDASSSH. The span at 2043–2052 shows a compositional bias: basic and acidic residues; that stretch reads HRYEAPRETI. Residues 2093–2106 show a composition bias toward polar residues; that stretch reads RYRQQQESPPQQTI. The CORNR box 2 signature appears at 2123–2127; sequence ICHII. The span at 2136 to 2145 shows a compositional bias: low complexity; that stretch reads PVNQPLQQPP. Residues 2136 to 2222 are disordered; the sequence is PVNQPLQQPP…PISPPQAPML (87 aa). Over residues 2146–2175 the composition is skewed to polar residues; the sequence is ASTFQSTNPTSTAVRTKASSRFSPESQVQP. Residues 2190–2209 show a composition bias toward basic and acidic residues; sequence IPDKPRGRPGKSPDRGHISE. The CORNR box 3 signature appears at 2326-2330; the sequence is LEDII. 2 disordered regions span residues 2344–2446 and 2464–2498; these read DHGV…YNPL and TSMT…DSDE. A compositionally biased stretch (polar residues) spans 2353 to 2362; that stretch reads QGNQSGTPNS. Basic residues predominate over residues 2380-2394; the sequence is HKQKLISKYGSRKTK. 2 stretches are compositionally biased toward polar residues: residues 2464 to 2476 and 2489 to 2498; these read TSMT…QQSR and QYETLSDSDE.

Belongs to the N-CoR nuclear receptor corepressors family. Forms a large corepressor complex that contains sin3a/b, histone deacetylases hdac1 and hdac2, rbbp4 and possibly rbbp7. Interacts with the thyroid receptor (TR, composed of rxra and thrb) and the retinoid acid receptor (RAR, composed of rxra and rara) in the absence of ligand. Interacts with tbl1xr1-A and possibly tbl1xr1-B. Interacts with zbtb33/kaiso.

The protein localises to the nucleus. Mediates transcriptional repression by certain nuclear receptors. Participates in complexes which promote histone deacetylation and the formation of repressive chromatin structures which may impede access by the basal transcription machinery. In association with hdac3, may play a role in the regulation of the circadian clock. The chain is Nuclear receptor corepressor 1 (ncor1) from Xenopus laevis (African clawed frog).